Reading from the N-terminus, the 438-residue chain is Serine hydroxymethyltransferase (438 aa).

Residues Leu133 and 137 to 139 contribute to the (6S)-5,6,7,8-tetrahydrofolate site; that span reads GHL. The residue at position 242 (Lys242) is an N6-(pyridoxal phosphate)lysine.

This sequence belongs to the SHMT family. As to quaternary structure, homodimer. It depends on pyridoxal 5'-phosphate as a cofactor.

Its subcellular location is the cytoplasm. It catalyses the reaction (6R)-5,10-methylene-5,6,7,8-tetrahydrofolate + glycine + H2O = (6S)-5,6,7,8-tetrahydrofolate + L-serine. Its pathway is one-carbon metabolism; tetrahydrofolate interconversion. It functions in the pathway amino-acid biosynthesis; glycine biosynthesis; glycine from L-serine: step 1/1. Functionally, catalyzes the reversible interconversion of serine and glycine with tetrahydrofolate (THF) serving as the one-carbon carrier. This reaction serves as the major source of one-carbon groups required for the biosynthesis of purines, thymidylate, methionine, and other important biomolecules. Also exhibits THF-independent aldolase activity toward beta-hydroxyamino acids, producing glycine and aldehydes, via a retro-aldol mechanism. This is Serine hydroxymethyltransferase from Brucella abortus (strain S19).